Here is a 361-residue protein sequence, read N- to C-terminus: Protein SSUH2 homolog (361 aa).

It localises to the cytoplasm. It is found in the nucleus. Functionally, plays a role in odontogenesis. This chain is Protein SSUH2 homolog, found in Danio rerio (Zebrafish).